The following is a 610-amino-acid chain: Membrane protein insertase YidC (610 aa).

The chain crosses the membrane as a helical span at residues 7–27 (FFITIALSILILALWQVFYLG). A disordered region spans residues 36 to 82 (QARIEEQQRQAQQAAQNRQASSSTGDTPQMPANPDSIPGQGDTKAAG). The span at 44 to 55 (RQAQQAAQNRQA) shows a compositional bias: low complexity. The next 5 membrane-spanning stretches (helical) occupy residues 358 to 378 (FDLL…FYLI), 387 to 407 (NFGV…FPLA), 458 to 478 (WPVL…YVTI), 510 to 530 (TVPH…IMFL), and 546 to 566 (IFTW…AGLV).

This sequence belongs to the OXA1/ALB3/YidC family. Type 1 subfamily. Interacts with the Sec translocase complex via SecD. Specifically interacts with transmembrane segments of nascent integral membrane proteins during membrane integration.

The protein resides in the cell inner membrane. Its function is as follows. Required for the insertion and/or proper folding and/or complex formation of integral membrane proteins into the membrane. Involved in integration of membrane proteins that insert both dependently and independently of the Sec translocase complex, as well as at least some lipoproteins. Aids folding of multispanning membrane proteins. In Brucella melitensis biotype 1 (strain ATCC 23456 / CCUG 17765 / NCTC 10094 / 16M), this protein is Membrane protein insertase YidC.